We begin with the raw amino-acid sequence, 887 residues long: Multiple RNA-binding domain-containing protein 1 (887 aa).

In terms of domain architecture, RRM 1 spans 2 to 94; that stretch reads SRIIVKGLPV…SKIEVSMAKS (93 aa). Disordered stretches follow at residues 121-143, 203-276, and 297-336; these read KLLQ…NIDD, KEEN…RNLA, and SEAE…DEEL. A phosphoserine mark is found at S220 and S264. Residues 264-276 show a composition bias toward basic and acidic residues; sequence SDEKENEKRRNLA. The span at 306–315 shows a compositional bias: polar residues; sequence SSYATEQNES. Basic and acidic residues predominate over residues 316 to 325; the sequence is LDTKKEEQPE. RRM domains are found at residues 345-423, 532-604, 663-746, and 763-840; these read GRLF…PGEE, KVIL…RGPK, VSIF…LSHR, and GKII…YAEE. Positions 864–887 are disordered; that stretch reads EMAALRNGGGRKKLDVDDEENEGF.

Belongs to the RRM MRD1 family. Interacts with NOP1. Binds to the 35S pre-rRNA and the U3 snoRNA.

Its subcellular location is the nucleus. In terms of biological role, involved in pre-rRNA processing. Required for maintaining steady-state levels of 40S ribosomal subunit. Required for the initial processing of pre-rRNA at the A0 to A2 sites, leading to the processing of the 23S pre-rRNA intermediate to the 18S rRNA. This Saccharomyces cerevisiae (strain ATCC 204508 / S288c) (Baker's yeast) protein is Multiple RNA-binding domain-containing protein 1 (MRD1).